The sequence spans 156 residues: Small ribosomal subunit protein uS7 (156 aa).

The protein belongs to the universal ribosomal protein uS7 family. In terms of assembly, part of the 30S ribosomal subunit. Contacts proteins S9 and S11.

Its function is as follows. One of the primary rRNA binding proteins, it binds directly to 16S rRNA where it nucleates assembly of the head domain of the 30S subunit. Is located at the subunit interface close to the decoding center, probably blocks exit of the E-site tRNA. The protein is Small ribosomal subunit protein uS7 of Acidithiobacillus ferrooxidans (strain ATCC 53993 / BNL-5-31) (Leptospirillum ferrooxidans (ATCC 53993)).